A 316-amino-acid chain; its full sequence is 4-diphosphocytidyl-2-C-methyl-D-erythritol kinase (316 aa).

Residue K11 is part of the active site. ATP is bound at residue P99–T109. The active site involves D141.

This sequence belongs to the GHMP kinase family. IspE subfamily.

The catalysed reaction is 4-CDP-2-C-methyl-D-erythritol + ATP = 4-CDP-2-C-methyl-D-erythritol 2-phosphate + ADP + H(+). It participates in isoprenoid biosynthesis; isopentenyl diphosphate biosynthesis via DXP pathway; isopentenyl diphosphate from 1-deoxy-D-xylulose 5-phosphate: step 3/6. Catalyzes the phosphorylation of the position 2 hydroxy group of 4-diphosphocytidyl-2C-methyl-D-erythritol. The protein is 4-diphosphocytidyl-2-C-methyl-D-erythritol kinase of Gloeothece citriformis (strain PCC 7424) (Cyanothece sp. (strain PCC 7424)).